A 331-amino-acid polypeptide reads, in one-letter code: DNA-directed RNA polymerase subunit alpha (331 aa).

The segment at 1 to 233 (MVREEIAVST…DLFLPFLHAE (233 aa)) is alpha N-terminal domain (alpha-NTD). Residues 268–331 (ALKRVFIDQS…GILQKRFAID (64 aa)) are alpha C-terminal domain (alpha-CTD).

The protein belongs to the RNA polymerase alpha chain family. In terms of assembly, in plastids the minimal PEP RNA polymerase catalytic core is composed of four subunits: alpha, beta, beta', and beta''. When a (nuclear-encoded) sigma factor is associated with the core the holoenzyme is formed, which can initiate transcription.

The protein resides in the plastid. Its subcellular location is the chloroplast. It catalyses the reaction RNA(n) + a ribonucleoside 5'-triphosphate = RNA(n+1) + diphosphate. DNA-dependent RNA polymerase catalyzes the transcription of DNA into RNA using the four ribonucleoside triphosphates as substrates. The chain is DNA-directed RNA polymerase subunit alpha from Illicium oligandrum (Star anise).